The primary structure comprises 75 residues: UPF0291 protein lin1342 (75 aa).

Positions 55–75 (IDPKGNDVTPHKIKQMRKNKK) are disordered. A compositionally biased stretch (basic residues) spans 65–75 (HKIKQMRKNKK).

Belongs to the UPF0291 family.

Its subcellular location is the cytoplasm. This is UPF0291 protein lin1342 from Listeria innocua serovar 6a (strain ATCC BAA-680 / CLIP 11262).